A 49-amino-acid chain; its full sequence is Osteocalcin (49 aa).

Residues 1–47 (YLYQWLGAPAPYPDPLEPKREVCELNPDCDELADHIGFQEAYRRFYG) form the Gla domain. Residue proline 9 is modified to 4-hydroxyproline. Glutamate 17, glutamate 21, glutamate 24, and aspartate 30 together coordinate Ca(2+). 4-carboxyglutamate is present on residues glutamate 17, glutamate 21, and glutamate 24. Cysteine 23 and cysteine 29 form a disulfide bridge.

It belongs to the osteocalcin/matrix Gla protein family. Post-translationally, gamma-carboxyglutamate residues are formed by vitamin K dependent carboxylation by GGCX. These residues are essential for the binding of calcium. Decarboxylation promotes the hormone activity.

It is found in the secreted. Functionally, the carboxylated form is one of the main organic components of the bone matrix, which constitutes 1-2% of the total bone protein: it acts as a negative regulator of bone formation and is required to limit bone formation without impairing bone resorption or mineralization. The carboxylated form binds strongly to apatite and calcium. In terms of biological role, the uncarboxylated form acts as a hormone secreted by osteoblasts, which regulates different cellular processes, such as energy metabolism, male fertility and brain development. Regulates of energy metabolism by acting as a hormone favoring pancreatic beta-cell proliferation, insulin secretion and sensitivity and energy expenditure. Uncarboxylated osteocalcin hormone also promotes testosterone production in the testes: acts as a ligand for G protein-coupled receptor GPRC6A at the surface of Leydig cells, initiating a signaling response that promotes the expression of enzymes required for testosterone synthesis in a CREB-dependent manner. Also acts as a regulator of brain development: osteocalcin hormone crosses the blood-brain barrier and acts as a ligand for GPR158 on neurons, initiating a signaling response that prevents neuronal apoptosis in the hippocampus, favors the synthesis of all monoamine neurotransmitters and inhibits that of gamma-aminobutyric acid (GABA). Osteocalcin also crosses the placenta during pregnancy and maternal osteocalcin is required for fetal brain development. The sequence is that of Osteocalcin (BGLAP) from Macaca fascicularis (Crab-eating macaque).